The following is a 347-amino-acid chain: Protein-glutamate methylesterase/protein-glutamine glutaminase 2 (347 aa).

The 118-residue stretch at 2–119 folds into the Response regulatory domain; sequence RVMIVDDSAV…LGGADLYRKD (118 aa). The residue at position 52 (aspartate 52) is a 4-aspartylphosphate. The disordered stretch occupies residues 131 to 153; the sequence is AARPAPPQAAPRPTLAPPSSDPA. Residues 134 to 150 show a composition bias toward pro residues; sequence PAPPQAAPRPTLAPPSS. One can recognise a CheB-type methylesterase domain in the interval 152-346; sequence PAGPIEAVVV…PYIASRARSV (195 aa). Residues serine 164, histidine 191, and aspartate 288 contribute to the active site.

This sequence belongs to the CheB family. In terms of processing, phosphorylated by CheA. Phosphorylation of the N-terminal regulatory domain activates the methylesterase activity.

It is found in the cytoplasm. It catalyses the reaction [protein]-L-glutamate 5-O-methyl ester + H2O = L-glutamyl-[protein] + methanol + H(+). The enzyme catalyses L-glutaminyl-[protein] + H2O = L-glutamyl-[protein] + NH4(+). Functionally, involved in chemotaxis. Part of a chemotaxis signal transduction system that modulates chemotaxis in response to various stimuli. Catalyzes the demethylation of specific methylglutamate residues introduced into the chemoreceptors (methyl-accepting chemotaxis proteins or MCP) by CheR. Also mediates the irreversible deamidation of specific glutamine residues to glutamic acid. The chain is Protein-glutamate methylesterase/protein-glutamine glutaminase 2 from Caulobacter vibrioides (strain ATCC 19089 / CIP 103742 / CB 15) (Caulobacter crescentus).